Consider the following 564-residue polypeptide: 4-hydroxybutyrate--CoA ligase 1 (564 aa).

A helical membrane pass occupies residues 105–125 (VHPMHWAVFLAVIKGGFVMVP). Residues 204-212 (TSGTTGMPK), 343-348 (DFYGQT), Asp429, and Arg444 contribute to the ATP site. Residue Thr348 coordinates substrate. 452-454 (SDY) provides a ligand contact to CoA. A substrate-binding site is contributed by Arg455. CoA is bound by residues Arg484, Lys513, and 521–523 (VPR). Lys538 lines the ATP pocket.

It belongs to the ATP-dependent AMP-binding enzyme family. It depends on Mg(2+) as a cofactor. The cofactor is Mn(2+).

It is found in the membrane. It carries out the reaction 4-hydroxybutanoate + ATP + CoA = 4-hydroxybutanoyl-CoA + AMP + diphosphate. The enzyme catalyses acetate + ATP + CoA = acetyl-CoA + AMP + diphosphate. It catalyses the reaction propanoate + ATP + CoA = propanoyl-CoA + AMP + diphosphate. The catalysed reaction is a medium-chain fatty acid + ATP + CoA = a medium-chain fatty acyl-CoA + AMP + diphosphate. Its function is as follows. Involved in the 3-hydroxypropionate/4-hydroxybutyrate cycle which incorporates carbon dioxide into cellular carbon. Catalyzes the ligation of coenzyme A (CoA) to 4-hydroxybutyrate (4HB). It can also use butyrate, valerate, propionate, acetate and 3-hydroxybutyrate (3HB) as substrates. The chain is 4-hydroxybutyrate--CoA ligase 1 from Metallosphaera sedula (strain ATCC 51363 / DSM 5348 / JCM 9185 / NBRC 15509 / TH2).